The sequence spans 594 residues: Pentatricopeptide repeat-containing protein At1g15480, mitochondrial (594 aa).

A mitochondrion-targeting transit peptide spans methionine 1–leucine 67. A compositionally biased stretch (low complexity) spans threonine 62–threonine 75. Residues threonine 62 to glutamate 109 are disordered. Positions threonine 95–glutamate 109 are enriched in acidic residues. PPR repeat units follow at residues glycine 226–leucine 260, serine 261–proline 294, asparagine 295–leucine 329, aspartate 330–glutamate 364, serine 432–isoleucine 466, glycine 467–proline 502, and leucine 503–serine 537.

This sequence belongs to the PPR family. P subfamily.

It is found in the mitochondrion. This Arabidopsis thaliana (Mouse-ear cress) protein is Pentatricopeptide repeat-containing protein At1g15480, mitochondrial.